Reading from the N-terminus, the 114-residue chain is UPF0757 protein YmgG (114 aa).

This sequence belongs to the UPF0757 family.

This Shigella flexneri protein is UPF0757 protein YmgG.